Here is a 141-residue protein sequence, read N- to C-terminus: MWVLGIAATFCGLFWLPGLALQIQCYQCEEFQLNNDCSSPEFIVNCTVNVQDMCQKEVMEQSAGIMYRKSCASSAACLIASAGYQSFCSPGKLNSVCISCCNTPLCNGPRPKKRGSSASAIRPGLLTTLLFFHLALCLAHC.

The signal sequence occupies residues 1–20; that stretch reads MWVLGIAATFCGLFWLPGLA. 6 cysteine pairs are disulfide-bonded: Cys-25-Cys-54, Cys-28-Cys-37, Cys-46-Cys-71, Cys-77-Cys-100, Cys-88-Cys-97, and Cys-101-Cys-106. A UPAR/Ly6 domain is found at 25–107; the sequence is CYQCEEFQLN…ISCCNTPLCN (83 aa). Residue Asn-45 is glycosylated (N-linked (GlcNAc...) asparagine). The GPI-anchor amidated glycine moiety is linked to residue Gly-115. Positions 116 to 141 are cleaved as a propeptide — removed in mature form; sequence SSASAIRPGLLTTLLFFHLALCLAHC.

As to quaternary structure, interacts with CHRNA4 and nAChRs containing alpha-4:beta-2 (CHRNA4:CHRNB2) and alpha-7 (CHRNA7) subunits. Preferentially expressed in the nervous system. Expressed in embryonic and postnatal postmitotic central and peripheral neurons including subpopulations of motor neurons, sensory neurons, interneurons and neurons of the autonomous nervous system. Expressed around the growing nerves in the limb bud. Expressed at high levels in specific brain regions such as the prefrontal cortex, amygdala, hippocampus, mediodorsal thalamus, dentate gyrus and specific brainstem nuclei (at protein level).

The protein localises to the cell membrane. In terms of biological role, believed to act as a modulator of nicotinic acetylcholine receptors (nAChRs) activity. In vitro increases receptor desensitization and decreases affinity for ACh of alpha-4:beta-2-containing nAChRs. May play a role in the intracellular trafficking of alpha-4:beta-2 and alpha-7-containing nAChRs and may inhibit their expression at the cell surface. May be involved in the control of anxiety. This Mus musculus (Mouse) protein is Ly6/PLAUR domain-containing protein 1 (Lypd1).